Consider the following 564-residue polypeptide: Dihydroxy-acid dehydratase (564 aa).

Position 53 (Cys-53) interacts with [2Fe-2S] cluster. Asp-85 is a binding site for Mg(2+). Cys-126 contributes to the [2Fe-2S] cluster binding site. Positions 127 and 128 each coordinate Mg(2+). Position 128 is an N6-carboxylysine (Lys-128). Position 203 (Cys-203) interacts with [2Fe-2S] cluster. Residue Glu-454 participates in Mg(2+) binding. Ser-480 acts as the Proton acceptor in catalysis.

The protein belongs to the IlvD/Edd family. Homodimer. The cofactor is [2Fe-2S] cluster. Mg(2+) is required as a cofactor.

The catalysed reaction is (2R)-2,3-dihydroxy-3-methylbutanoate = 3-methyl-2-oxobutanoate + H2O. It catalyses the reaction (2R,3R)-2,3-dihydroxy-3-methylpentanoate = (S)-3-methyl-2-oxopentanoate + H2O. The protein operates within amino-acid biosynthesis; L-isoleucine biosynthesis; L-isoleucine from 2-oxobutanoate: step 3/4. It participates in amino-acid biosynthesis; L-valine biosynthesis; L-valine from pyruvate: step 3/4. Its function is as follows. Functions in the biosynthesis of branched-chain amino acids. Catalyzes the dehydration of (2R,3R)-2,3-dihydroxy-3-methylpentanoate (2,3-dihydroxy-3-methylvalerate) into 2-oxo-3-methylpentanoate (2-oxo-3-methylvalerate) and of (2R)-2,3-dihydroxy-3-methylbutanoate (2,3-dihydroxyisovalerate) into 2-oxo-3-methylbutanoate (2-oxoisovalerate), the penultimate precursor to L-isoleucine and L-valine, respectively. The polypeptide is Dihydroxy-acid dehydratase (Leifsonia xyli subsp. xyli (strain CTCB07)).